A 469-amino-acid chain; its full sequence is Glutamate--tRNA ligase 1 (469 aa).

The short motif at Pro-10–Gly-20 is the 'HIGH' region element. Residues Cys-99, Cys-101, Cys-126, and Asp-128 each coordinate Zn(2+). Positions Arg-237 to Arg-241 match the 'KMSKS' region motif. Residue Lys-240 coordinates ATP.

This sequence belongs to the class-I aminoacyl-tRNA synthetase family. Glutamate--tRNA ligase type 1 subfamily. As to quaternary structure, monomer. It depends on Zn(2+) as a cofactor.

The protein localises to the cytoplasm. It catalyses the reaction tRNA(Glu) + L-glutamate + ATP = L-glutamyl-tRNA(Glu) + AMP + diphosphate. In terms of biological role, catalyzes the attachment of glutamate to tRNA(Glu) in a two-step reaction: glutamate is first activated by ATP to form Glu-AMP and then transferred to the acceptor end of tRNA(Glu). In Coxiella burnetii (strain CbuK_Q154) (Coxiella burnetii (strain Q154)), this protein is Glutamate--tRNA ligase 1.